The following is a 305-amino-acid chain: tRNA pseudouridine synthase B (305 aa).

Aspartate 39 (nucleophile) is an active-site residue.

The protein belongs to the pseudouridine synthase TruB family. Type 1 subfamily.

It catalyses the reaction uridine(55) in tRNA = pseudouridine(55) in tRNA. In terms of biological role, responsible for synthesis of pseudouridine from uracil-55 in the psi GC loop of transfer RNAs. This Staphylococcus aureus (strain Newman) protein is tRNA pseudouridine synthase B.